Consider the following 462-residue polypeptide: Ubiquitin carboxyl-terminal hydrolase calypso (462 aa).

The UCH catalytic domain maps to 29–260; the sequence is GWLELESDPG…IRFNLMAVVP (232 aa). C115 (nucleophile) is an active-site residue. H197 acts as the Proton donor in catalysis. Residues 357-385 enclose the ULD domain; that stretch reads NYDKFICTFLSMLAHQGVLGELVSQHLLP. The segment at 387 to 462 is positively charged C-terminal tail required for binding nucleosomes; that stretch reads KKIANRLNRQ…KGRNKCRKRK (76 aa). Residues 413-447 are compositionally biased toward low complexity; sequence GTNAAGSKSQQQQQQTQQQPQQTQTAKNGKSPGKT. The interval 413 to 462 is disordered; it reads GTNAAGSKSQQQQQQTQQQPQQTQTAKNGKSPGKTPGRRRKGRNKCRKRK. Over residues 448-462 the composition is skewed to basic residues; that stretch reads PGRRRKGRNKCRKRK.

The protein belongs to the peptidase C12 family. BAP1 subfamily. In terms of assembly, catalytic component of the polycomb repressive deubiquitinase (PR-DUB) complex, at least composed of caly/calypso, Asx and sba (MBD5/6 homolog). The PR-DUB complex associates with nucleosomes to mediate deubiquitination of histone H2AK118ub1 substrates; the association requires the positively charged C-terminal tail of caly, probably due to direct binding of DNA. Interacts (via ULD domain) with Asx (via DEUBAD domain); the interaction produces a stable heterodimer with a composite binding site for ubiquitin. Homodimerizes (via coiled-coil hinge-region between the UCH and ULD domains) to mediate assembly of 2 copies of the caly-Asx heterodimer into a bisymmetric tetramer; dimerization enhances PR-DUB association with nucleosomes.

It localises to the nucleus. The catalysed reaction is Thiol-dependent hydrolysis of ester, thioester, amide, peptide and isopeptide bonds formed by the C-terminal Gly of ubiquitin (a 76-residue protein attached to proteins as an intracellular targeting signal).. Functionally, catalytic component of the polycomb repressive deubiquitinase (PR-DUB) complex, a complex that specifically mediates deubiquitination of histone H2A monoubiquitinated at 'Lys-119' (H2AK118ub1). Mediates bisymmetric organization of the PR-DUB complex and is involved in association with nucleosomes to mediate deubiquitination. Does not deubiquitinate monoubiquitinated histone H2B. Required to maintain the transcriptionally repressive state of homeotic genes throughout development. The PR-DUB complex has weak or no activity toward 'Lys-48'- and 'Lys-63'-linked polyubiquitin chains. Polycomb group (PcG) protein. The polypeptide is Ubiquitin carboxyl-terminal hydrolase calypso (Drosophila grimshawi (Hawaiian fruit fly)).